The sequence spans 247 residues: Probable transcriptional regulatory protein BT_0627 (247 aa).

The protein belongs to the TACO1 family.

The protein localises to the cytoplasm. This chain is Probable transcriptional regulatory protein BT_0627, found in Bacteroides thetaiotaomicron (strain ATCC 29148 / DSM 2079 / JCM 5827 / CCUG 10774 / NCTC 10582 / VPI-5482 / E50).